The sequence spans 483 residues: Trimethylamine methyltransferase MttB (483 aa).

Position 334 (pyrrolysine 334) is a non-standard amino acid, pyrrolysine.

It belongs to the trimethylamine methyltransferase family. In terms of assembly, can form a complex with MttC.

The catalysed reaction is Co(I)-[trimethylamine-specific corrinoid protein] + trimethylamine + H(+) = methyl-Co(III)-[trimethylamine-specific corrinoid protein] + dimethylamine. It participates in one-carbon metabolism; methanogenesis from trimethylamine. Catalyzes the transfer of a methyl group from trimethylamine to the corrinoid cofactor of MttC. The protein is Trimethylamine methyltransferase MttB (mttB) of Methanosarcina thermophila.